Reading from the N-terminus, the 125-residue chain is Protein ApaG (125 aa).

An ApaG domain is found at 1-125; the sequence is MINAPRVCVQ…FRLAIPSLIH (125 aa).

The chain is Protein ApaG from Pectobacterium carotovorum subsp. carotovorum (strain PC1).